Here is a 97-residue protein sequence, read N- to C-terminus: YcgL domain-containing protein PMI1171 (97 aa).

One can recognise a YcgL domain in the interval methionine 3–leucine 87.

The chain is YcgL domain-containing protein PMI1171 from Proteus mirabilis (strain HI4320).